Consider the following 741-residue polypeptide: Cysteine--tRNA ligase, cytoplasmic (741 aa).

Position 46 (Cys46) interacts with Zn(2+). A 'HIGH' region motif is present at residues 48-58 (PTVYDASHMGH). Position 297 is a phosphoserine (Ser297). Zn(2+) contacts are provided by Cys340, His365, and Glu369. Positions 398–402 (KMSKS) match the 'KMSKS' region motif. Lys401 contacts ATP. Positions 697 to 718 (FDENGLPTHDKEGKEVSKGQIK) are disordered. Basic and acidic residues predominate over residues 704-713 (THDKEGKEVS).

Belongs to the class-I aminoacyl-tRNA synthetase family. Zn(2+) serves as cofactor.

The protein localises to the cytoplasm. It carries out the reaction tRNA(Cys) + L-cysteine + ATP = L-cysteinyl-tRNA(Cys) + AMP + diphosphate. In Drosophila melanogaster (Fruit fly), this protein is Cysteine--tRNA ligase, cytoplasmic.